Consider the following 406-residue polypeptide: Cysteine desulfurase (406 aa).

K226 carries the N6-(pyridoxal phosphate)lysine modification. Residue C364 is the Cysteine persulfide intermediate of the active site.

Belongs to the class-V pyridoxal-phosphate-dependent aminotransferase family. Csd subfamily. In terms of assembly, homodimer. Interacts with SufE and the SufBCD complex composed of SufB, SufC and SufD. The interaction with SufE is required to mediate the direct transfer of the sulfur atom from the S-sulfanylcysteine. Requires pyridoxal 5'-phosphate as cofactor.

Its subcellular location is the cytoplasm. The catalysed reaction is (sulfur carrier)-H + L-cysteine = (sulfur carrier)-SH + L-alanine. The enzyme catalyses L-selenocysteine + AH2 = hydrogenselenide + L-alanine + A + H(+). It functions in the pathway cofactor biosynthesis; iron-sulfur cluster biosynthesis. Functionally, cysteine desulfurases mobilize the sulfur from L-cysteine to yield L-alanine, an essential step in sulfur metabolism for biosynthesis of a variety of sulfur-containing biomolecules. Component of the suf operon, which is activated and required under specific conditions such as oxidative stress and iron limitation. Acts as a potent selenocysteine lyase in vitro, that mobilizes selenium from L-selenocysteine. Selenocysteine lyase activity is however unsure in vivo. In Enterobacter sp. (strain 638), this protein is Cysteine desulfurase.